A 341-amino-acid chain; its full sequence is tRNA N6-adenosine threonylcarbamoyltransferase (341 aa).

The Fe cation site is built by His-111 and His-115. Residues 133-137 (AVSGG), Asp-166, Gly-179, Asp-183, and Asn-273 contribute to the substrate site. Fe cation is bound at residue Asp-301.

This sequence belongs to the KAE1 / TsaD family. The cofactor is Fe(2+).

The protein resides in the cytoplasm. It carries out the reaction L-threonylcarbamoyladenylate + adenosine(37) in tRNA = N(6)-L-threonylcarbamoyladenosine(37) in tRNA + AMP + H(+). Its function is as follows. Required for the formation of a threonylcarbamoyl group on adenosine at position 37 (t(6)A37) in tRNAs that read codons beginning with adenine. Is involved in the transfer of the threonylcarbamoyl moiety of threonylcarbamoyl-AMP (TC-AMP) to the N6 group of A37, together with TsaE and TsaB. TsaD likely plays a direct catalytic role in this reaction. The chain is tRNA N6-adenosine threonylcarbamoyltransferase from Geotalea daltonii (strain DSM 22248 / JCM 15807 / FRC-32) (Geobacter daltonii).